The sequence spans 480 residues: Gasdermin-C4 (480 aa).

The tract at residues 1 to 226 (MGYSFDRASK…TCVILPSATK (226 aa)) is triggers pyroptosis.

It belongs to the gasdermin family. As to quaternary structure, homooligomer; homooligomeric ring-shaped pore complex containing 27-28 subunits when inserted in the membrane. Post-translationally, cleavage by CASP8 relieves autoinhibition by releasing the N-terminal moiety (Gasdermin-C4, N-terminal) that initiates pyroptosis. In terms of processing, palmitoylated.

It localises to the cytoplasm. The protein localises to the cytosol. Its subcellular location is the cell membrane. The full-length protein before cleavage is inactive: intramolecular interactions between N- and C-terminal domains mediate autoinhibition in the absence of activation signal. The intrinsic pyroptosis-inducing activity is carried by the released N-terminal moiety (Gasdermin-C4, N-terminal) following cleavage by caspase CASP8. This form constitutes the precursor of the pore-forming protein: upon cleavage, the released N-terminal moiety (Gasdermin-C4, N-terminal) binds to membranes and forms pores, triggering pyroptosis. Its function is as follows. Pore-forming protein that causes membrane permeabilization and pyroptosis. Produced by the cleavage of gasdermin-C4 by caspase CASP8 in response to death signals. After cleavage, moves to the plasma membrane where it strongly binds to membrane inner leaflet lipids. Homooligomerizes within the membrane and forms pores of 10-15 nanometers (nm) of inner diameter, triggering pyroptosis. The chain is Gasdermin-C4 from Mus musculus (Mouse).